The chain runs to 462 residues: Cysteine--tRNA ligase (462 aa).

Zn(2+) is bound at residue C30. The 'HIGH' region motif lies at 32–42 (MTVYDYCHVGH). Residues C214, H239, and E243 each contribute to the Zn(2+) site. The short motif at 271–275 (KMSKS) is the 'KMSKS' region element. K274 provides a ligand contact to ATP.

It belongs to the class-I aminoacyl-tRNA synthetase family. As to quaternary structure, monomer. Zn(2+) is required as a cofactor.

Its subcellular location is the cytoplasm. The enzyme catalyses tRNA(Cys) + L-cysteine + ATP = L-cysteinyl-tRNA(Cys) + AMP + diphosphate. The polypeptide is Cysteine--tRNA ligase (Cupriavidus taiwanensis (strain DSM 17343 / BCRC 17206 / CCUG 44338 / CIP 107171 / LMG 19424 / R1) (Ralstonia taiwanensis (strain LMG 19424))).